The primary structure comprises 131 residues: Arsenate reductase (131 aa).

Active-site nucleophile residues include Cys10, Cys82, and Cys89. 2 cysteine pairs are disulfide-bonded: Cys10/Cys82 and Cys82/Cys89.

It belongs to the low molecular weight phosphotyrosine protein phosphatase family. Thioredoxin-coupled ArsC subfamily.

It localises to the cytoplasm. The catalysed reaction is arsenate + [thioredoxin]-dithiol + H(+) = arsenite + [thioredoxin]-disulfide + H2O. Catalyzes the reduction of arsenate [As(V)] to arsenite [As(III)]. The polypeptide is Arsenate reductase (Staphylococcus aureus (strain bovine RF122 / ET3-1)).